Reading from the N-terminus, the 754-residue chain is Zinc finger protein with KRAB and SCAN domains 7 (754 aa).

Lys-28 participates in a covalent cross-link: Glycyl lysine isopeptide (Lys-Gly) (interchain with G-Cter in SUMO2). In terms of domain architecture, SCAN box spans 54–136 (RLHFRQLCYH…AVVEDFQRHL (83 aa)). Residues 157–215 (TALGTTKESPPTSPLSGGSAPGAHLEPPYDPGTHHLPSGDFAQCTSPVPTLPQVGNSGD) form a disordered region. Composition is skewed to polar residues over residues 158–172 (ALGT…SPLS) and 199–215 (QCTS…NSGD). The KRAB domain occupies 231–306 (VAYEDLSVDY…TSGGLFGVVP (76 aa)). C2H2-type zinc fingers lie at residues 383–405 (YRCD…QRIH), 411–433 (YECN…LRTH), 439–461 (YECS…QRLH), 467–489 (YKCN…QRTH), 495–517 (YECN…QVLH), 523–545 (YKCN…QRIH), 551–573 (YECS…QSLH), 579–601 (YKCS…ERIH), 607–629 (FECS…QRLH), and 635–657 (YKCN…QRIH). A C2H2-type 11; degenerate zinc finger spans residues 663–685 (YECNECGKVFSYSSSLMVHQRTH). 2 consecutive C2H2-type zinc fingers follow at residues 691–713 (YKCN…QRVH) and 719–741 (YECS…QRTH). The interval 735-754 (NHHQRTHTGEKSSGLAWSVS) is disordered.

It belongs to the krueppel C2H2-type zinc-finger protein family.

The protein localises to the nucleus. Functionally, may be involved in transcriptional regulation. The polypeptide is Zinc finger protein with KRAB and SCAN domains 7 (ZKSCAN7) (Homo sapiens (Human)).